Consider the following 394-residue polypeptide: Bifunctional enzyme Fae/Hps (394 aa).

The formaldehyde-activating enzyme stretch occupies residues 1–162; it reads MEFRIGEALI…YEKDRSFHPF (162 aa). The active-site Proton donor is the H18. Positions 20, 49, 67, 69, and 84 each coordinate substrate. The tract at residues 163 to 394 is 3-hexulose-6-phosphate synthase; the sequence is VGRKLTKLWD…TDQFRIMTDF (232 aa).

The protein in the N-terminal section; belongs to the formaldehyde-activating enzyme family. It in the C-terminal section; belongs to the HPS/KGPDC family. HPS subfamily.

The catalysed reaction is 5,6,7,8-tetrahydromethanopterin + formaldehyde = 5,10-methylenetetrahydromethanopterin + H2O. It carries out the reaction D-ribulose 5-phosphate + formaldehyde = D-arabino-hex-3-ulose 6-phosphate. It participates in carbohydrate biosynthesis; D-ribose 5-phosphate biosynthesis. Catalyzes the condensation of formaldehyde with tetrahydromethanopterin (H(4)MPT) to 5,10-methylenetetrahydromethanopterin. Its function is as follows. Catalyzes the reversible formation of ribulose-5-phosphate and formaldehyde from 3-hexulose-6-phosphate. This Archaeoglobus fulgidus (strain ATCC 49558 / DSM 4304 / JCM 9628 / NBRC 100126 / VC-16) protein is Bifunctional enzyme Fae/Hps.